We begin with the raw amino-acid sequence, 467 residues long: MKIRTRYAPSPTGFLHIGGARTALFNYLFAKHHNGDFILRIEDSDNSRNIKDGEKSQIENLLWLGIIPDEKPGSETKFGPYRQSEKLERYQKLAQELIKKGFAYYAFDNQEELELQKKEQIAKGIFSFRYDQNWLKISDQEKQKRLKNKHFVIRFKVDKAKNFCWNDLVRGQICFEGSAISDWVIIKSDGFPTYNFAVVVDDFDMEISHIFRGEEHISNTPKQIGIYQAFNWKTPKFGHLTIITDKNGKKLSKRDKSLFQFIEDYKNQGYHSEAFFNFLALLGWTSPDSQEFFDHKSLIKAFDYKRLSKAPSYFDIEKLNWFSKSYISKMPVDKILENLELSDNQIWNQFFVETFQKSSIKYADFYKNFEFFHRPKQEMDEKMLEIFEKLDKKPVKIFASKIDYQNWDYTKINDLIKEIGQKLEITGKNLLLPIRLATTFTNSGPELARAIWLLGKKIIEKRLLKWK.

The short motif at 9 to 19 (PSPTGFLHIGG) is the 'HIGH' region element. The short motif at 250 to 254 (KLSKR) is the 'KMSKS' region element. Position 253 (Lys-253) interacts with ATP.

This sequence belongs to the class-I aminoacyl-tRNA synthetase family. Glutamate--tRNA ligase type 1 subfamily. As to quaternary structure, monomer.

The protein resides in the cytoplasm. The catalysed reaction is tRNA(Glu) + L-glutamate + ATP = L-glutamyl-tRNA(Glu) + AMP + diphosphate. Its function is as follows. Catalyzes the attachment of glutamate to tRNA(Glu) in a two-step reaction: glutamate is first activated by ATP to form Glu-AMP and then transferred to the acceptor end of tRNA(Glu). This Mesomycoplasma hyopneumoniae (strain 232) (Mycoplasma hyopneumoniae) protein is Glutamate--tRNA ligase.